Reading from the N-terminus, the 397-residue chain is Odorant receptor 2a (397 aa).

The Cytoplasmic portion of the chain corresponds to 1-38 (MEKQEDFKLNTHSAVYYHWRVWELTGLMRPPGVSSLLY). A helical transmembrane segment spans residues 39–59 (VVYSITVNLVVTVLFPLSLLA). Over 60 to 72 (RLLFTTNMAGLCE) the chain is Extracellular. A helical transmembrane segment spans residues 73-92 (NLTITITDIVANLKFANVYM). The Cytoplasmic portion of the chain corresponds to 93 to 131 (VRKQLHEIRSLLRLMDARARLVGDPEEISALRKEVNIAQ). Residues 132–150 (GTFRTFASIFVFGTTLSCV) traverse the membrane as a helical segment. Residues 151–176 (RVVVRPDRELLYPAWFGVDWMHSTRN) lie on the Extracellular side of the membrane. Residues 177–197 (YVLINIYQLFGLIVQAIQNCA) traverse the membrane as a helical segment. At 198–272 (SDSYPPAFLC…IIQRVLSVPC (75 aa)) the chain is on the cytoplasmic side. Residues 273-293 (MAQFVCSAAVQCTVAMHFLYV) form a helical membrane-spanning segment. At 294 to 301 (ADDHDHTA) the chain is on the extracellular side. The helical transmembrane segment at 302-322 (MIISIVFFSAVTLEVFVICYF) threads the bilayer. Over 323 to 363 (GDRMRTQSEALCDAFYDCNWIEQLPKFKRELLFTLARTQRP) the chain is Cytoplasmic. The helical transmembrane segment at 364-383 (SLIYAGNYIALSLETFEQVM) threads the bilayer. Over 384-397 (RFTYSVFTLLLRAK) the chain is Extracellular.

This sequence belongs to the insect chemoreceptor superfamily. Heteromeric odorant receptor channel (TC 1.A.69) family. Or2a subfamily. Interacts with Orco. Complexes exist early in the endomembrane system in olfactory sensory neurons (OSNs), coupling these complexes to the conserved ciliary trafficking pathway. As to expression, expressed in 20 sensory neurons on the distal edge of the antenna.

It is found in the cell membrane. Functionally, odorant receptor which mediates acceptance or avoidance behavior, depending on its substrates. The odorant receptor repertoire encodes a large collection of odor stimuli that vary widely in identity, intensity, and duration. May form a complex with Orco to form odorant-sensing units, providing sensitive and prolonged odorant signaling and calcium permeability. The sequence is that of Odorant receptor 2a (Or2a) from Drosophila melanogaster (Fruit fly).